Here is a 218-residue protein sequence, read N- to C-terminus: Probable transaldolase (218 aa).

Residue K87 is the Schiff-base intermediate with substrate of the active site.

It belongs to the transaldolase family. Type 3B subfamily.

The protein resides in the cytoplasm. It carries out the reaction D-sedoheptulose 7-phosphate + D-glyceraldehyde 3-phosphate = D-erythrose 4-phosphate + beta-D-fructose 6-phosphate. It functions in the pathway carbohydrate degradation; pentose phosphate pathway; D-glyceraldehyde 3-phosphate and beta-D-fructose 6-phosphate from D-ribose 5-phosphate and D-xylulose 5-phosphate (non-oxidative stage): step 2/3. Its function is as follows. Transaldolase is important for the balance of metabolites in the pentose-phosphate pathway. The protein is Probable transaldolase of Bacteroides fragilis (strain ATCC 25285 / DSM 2151 / CCUG 4856 / JCM 11019 / LMG 10263 / NCTC 9343 / Onslow / VPI 2553 / EN-2).